A 427-amino-acid polypeptide reads, in one-letter code: Glutamate-1-semialdehyde 2,1-aminomutase (427 aa).

At Lys265 the chain carries N6-(pyridoxal phosphate)lysine.

The protein belongs to the class-III pyridoxal-phosphate-dependent aminotransferase family. HemL subfamily. As to quaternary structure, homodimer. Pyridoxal 5'-phosphate serves as cofactor.

The protein localises to the cytoplasm. It catalyses the reaction (S)-4-amino-5-oxopentanoate = 5-aminolevulinate. The protein operates within porphyrin-containing compound metabolism; protoporphyrin-IX biosynthesis; 5-aminolevulinate from L-glutamyl-tRNA(Glu): step 2/2. In Pseudomonas putida (strain ATCC 47054 / DSM 6125 / CFBP 8728 / NCIMB 11950 / KT2440), this protein is Glutamate-1-semialdehyde 2,1-aminomutase.